The primary structure comprises 700 residues: Elongation factor G (700 aa).

The tr-type G domain maps to 8–290; that stretch reads SLYRNIGISA…AVIDYLPAPT (283 aa). GTP-binding positions include 17–24, 88–92, and 142–145; these read AHIDAGKT, DTPGH, and NKMD.

It belongs to the TRAFAC class translation factor GTPase superfamily. Classic translation factor GTPase family. EF-G/EF-2 subfamily.

The protein localises to the cytoplasm. In terms of biological role, catalyzes the GTP-dependent ribosomal translocation step during translation elongation. During this step, the ribosome changes from the pre-translocational (PRE) to the post-translocational (POST) state as the newly formed A-site-bound peptidyl-tRNA and P-site-bound deacylated tRNA move to the P and E sites, respectively. Catalyzes the coordinated movement of the two tRNA molecules, the mRNA and conformational changes in the ribosome. The sequence is that of Elongation factor G from Histophilus somni (strain 129Pt) (Haemophilus somnus).